The sequence spans 515 residues: Bifunctional purine biosynthesis protein PurH (515 aa).

Residues 1–145 form the MGS-like domain; sequence MTKRALISVS…KNHASVTVVV (145 aa).

This sequence belongs to the PurH family.

It catalyses the reaction (6R)-10-formyltetrahydrofolate + 5-amino-1-(5-phospho-beta-D-ribosyl)imidazole-4-carboxamide = 5-formamido-1-(5-phospho-D-ribosyl)imidazole-4-carboxamide + (6S)-5,6,7,8-tetrahydrofolate. It carries out the reaction IMP + H2O = 5-formamido-1-(5-phospho-D-ribosyl)imidazole-4-carboxamide. Its pathway is purine metabolism; IMP biosynthesis via de novo pathway; 5-formamido-1-(5-phospho-D-ribosyl)imidazole-4-carboxamide from 5-amino-1-(5-phospho-D-ribosyl)imidazole-4-carboxamide (10-formyl THF route): step 1/1. It participates in purine metabolism; IMP biosynthesis via de novo pathway; IMP from 5-formamido-1-(5-phospho-D-ribosyl)imidazole-4-carboxamide: step 1/1. This Streptococcus agalactiae serotype Ia (strain ATCC 27591 / A909 / CDC SS700) protein is Bifunctional purine biosynthesis protein PurH.